Reading from the N-terminus, the 2648-residue chain is E3 ubiquitin-protein ligase hecd-1 (2648 aa).

2 ANK repeats span residues 374–403 (VGQSLTNWASAFGSIEMVQYLCDKGSDVNK) and 405–434 (HKSSSLHYAACFGRPDVVKLLLQRGANPDL). The segment covering 433–455 (DLRDEDGKTALDKARERSDDDHN) has biased composition (basic and acidic residues). Disordered regions lie at residues 433-494 (DLRD…ELPN), 645-714 (PMEI…KATA), and 1376-1400 (DPPKKDSPAGTSSTPGSSSSAALPP). Composition is skewed to polar residues over residues 478–489 (ASTSKQPGTSTK), 652–661 (NQPSSSTAVP), and 670–688 (TVPSSSGGADAESNSNPST). Composition is skewed to low complexity over residues 696–714 (SSTPSSSTQQSISKPKATA) and 1383–1400 (PAGTSSTPGSSSSAALPP). The 73-residue stretch at 1438–1510 (RSRGSYKISE…NFDIERVTST (73 aa)) folds into the MIB/HERC2 domain. Disordered stretches follow at residues 1538–1562 (YTPKTTGGPPSSSVFGTSSSAGSSR), 1575–1629 (KNTT…SLQH), 1652–1796 (NQEP…LLGG), and 1811–1836 (ESLSDASSSAKDATTNEAQKKGGKKP). Low complexity-rich tracts occupy residues 1543-1562 (TGGPPSSSVFGTSSSAGSSR) and 1575-1586 (KNTTPAGTPSSG). A compositionally biased stretch (polar residues) spans 1610–1629 (TSGPSVASTGQAASAESLQH). The span at 1653 to 1666 (QEPEDEPMGGEESD) shows a compositional bias: acidic residues. Low complexity predominate over residues 1667-1696 (SAASMRSAASSNSQMSMGSSSQQQQQQDSD). Composition is skewed to acidic residues over residues 1736 to 1746 (TDGDADADETN) and 1756 to 1783 (DAMEEDDEEEETMEDEEDDDDDDDDESS). The segment covering 1812–1823 (SLSDASSSAKDA) has biased composition (low complexity). The 409-residue stretch at 2240–2648 (FHADRKAVLE…AINEKGFHLN (409 aa)) folds into the HECT domain. Catalysis depends on C2617, which acts as the Glycyl thioester intermediate.

Belongs to the UPL family. K-HECT subfamily. Expressed in most tissues, including hypodermis, muscle, intestine, vulva, and neurons.

The catalysed reaction is S-ubiquitinyl-[E2 ubiquitin-conjugating enzyme]-L-cysteine + [acceptor protein]-L-lysine = [E2 ubiquitin-conjugating enzyme]-L-cysteine + N(6)-ubiquitinyl-[acceptor protein]-L-lysine.. Its pathway is protein modification; protein ubiquitination. In terms of biological role, E3 ubiquitin-protein ligase which accepts ubiquitin from an E2 ubiquitin-conjugating enzyme in the form of a thioester and then directly transfers the ubiquitin to targeted substrates. Involved in the ubiquitination and proteasomal-mediated degradation of cytoplasmic and mitochondrial proteins. Positively regulates lin-12 activity in the anchor cell (AC)/vulval precursor (VU) cell fate decision. Negatively regulates glp-1 activity in germline proliferation. May play a role in the formation of fibrous organelles, a hemidesmosome-like structure attaching muscles to the epidermis. Regulates germline DNA double-strand-break repair and apoptosis in response to DNA damage by recruiting E4 ubiquitin-protein ligase ufd-2 to DNA repair foci. This Caenorhabditis elegans protein is E3 ubiquitin-protein ligase hecd-1.